A 452-amino-acid chain; its full sequence is GTPase Der (452 aa).

2 EngA-type G domains span residues 9–170 (KIIA…PEED) and 185–362 (LQIV…KTWN). Residues 15–22 (GRPNVGKS), 62–66 (DTPGL), 124–127 (NKCE), 191–198 (GRPNAGKS), 238–242 (DTAGL), and 303–306 (NKWD) contribute to the GTP site. The 86-residue stretch at 363 to 448 (KKITTSKLNE…PIRFNYIKTK (86 aa)) folds into the KH-like domain.

The protein belongs to the TRAFAC class TrmE-Era-EngA-EngB-Septin-like GTPase superfamily. EngA (Der) GTPase family. As to quaternary structure, associates with the 50S ribosomal subunit.

Functionally, GTPase that plays an essential role in the late steps of ribosome biogenesis. The polypeptide is GTPase Der (Rickettsia bellii (strain RML369-C)).